The sequence spans 311 residues: Pyrimidine-specific ribonucleoside hydrolase RihA (311 aa).

Histidine 240 is a catalytic residue.

Belongs to the IUNH family. RihA subfamily.

In terms of biological role, hydrolyzes cytidine or uridine to ribose and cytosine or uracil, respectively. The sequence is that of Pyrimidine-specific ribonucleoside hydrolase RihA from Salmonella paratyphi B (strain ATCC BAA-1250 / SPB7).